A 541-amino-acid polypeptide reads, in one-letter code: Ankyrin repeat domain-containing protein 13C (541 aa).

The segment covering 1-20 (MTGEKIRSLRRDHKPSKEDG) has biased composition (basic and acidic residues). The segment at 1–53 (MTGEKIRSLRRDHKPSKEDGDVLEPCEEEATAALGGAFTGGRSGPGGSGKGGK) is disordered. Over residues 21 to 30 (DVLEPCEEEA) the composition is skewed to acidic residues. A compositionally biased stretch (gly residues) spans 37–52 (AFTGGRSGPGGSGKGG). 3 ANK repeats span residues 111–142 (PSLY…QKDN), 143–172 (HGNT…PVKV), and 176–205 (QGWS…QQSR). Ser-411 is modified (phosphoserine).

The protein resides in the endoplasmic reticulum membrane. In terms of biological role, acts as a molecular chaperone for G protein-coupled receptors, regulating their biogenesis and exit from the ER. This Mus musculus (Mouse) protein is Ankyrin repeat domain-containing protein 13C (Ankrd13c).